Reading from the N-terminus, the 231-residue chain is Cytidylate kinase (231 aa).

18–26 is an ATP binding site; that stretch reads GPSGTGKSS.

This sequence belongs to the cytidylate kinase family. Type 1 subfamily.

It localises to the cytoplasm. The enzyme catalyses CMP + ATP = CDP + ADP. It catalyses the reaction dCMP + ATP = dCDP + ADP. This Streptomyces griseus subsp. griseus (strain JCM 4626 / CBS 651.72 / NBRC 13350 / KCC S-0626 / ISP 5235) protein is Cytidylate kinase.